The primary structure comprises 264 residues: Thymidylate synthase (264 aa).

Arginine 21 provides a ligand contact to dUMP. Histidine 51 is a binding site for (6R)-5,10-methylene-5,6,7,8-tetrahydrofolate. Arginine 126–arginine 127 contributes to the dUMP binding site. Cysteine 146 functions as the Nucleophile in the catalytic mechanism. DUMP contacts are provided by residues arginine 166–aspartate 169, asparagine 177, and histidine 207–tyrosine 209. (6R)-5,10-methylene-5,6,7,8-tetrahydrofolate is bound at residue aspartate 169. (6R)-5,10-methylene-5,6,7,8-tetrahydrofolate is bound at residue alanine 263.

Belongs to the thymidylate synthase family. Bacterial-type ThyA subfamily. In terms of assembly, homodimer.

Its subcellular location is the cytoplasm. The enzyme catalyses dUMP + (6R)-5,10-methylene-5,6,7,8-tetrahydrofolate = 7,8-dihydrofolate + dTMP. Its pathway is pyrimidine metabolism; dTTP biosynthesis. Catalyzes the reductive methylation of 2'-deoxyuridine-5'-monophosphate (dUMP) to 2'-deoxythymidine-5'-monophosphate (dTMP) while utilizing 5,10-methylenetetrahydrofolate (mTHF) as the methyl donor and reductant in the reaction, yielding dihydrofolate (DHF) as a by-product. This enzymatic reaction provides an intracellular de novo source of dTMP, an essential precursor for DNA biosynthesis. The sequence is that of Thymidylate synthase from Chromobacterium violaceum (strain ATCC 12472 / DSM 30191 / JCM 1249 / CCUG 213 / NBRC 12614 / NCIMB 9131 / NCTC 9757 / MK).